Reading from the N-terminus, the 62-residue chain is Toxin Tb2 (62 aa).

In terms of domain architecture, LCN-type CS-alpha/beta spans 1–62 (KEGYAMDHEG…KVWDYATNKC (62 aa)). 4 disulfides stabilise this stretch: Cys11/Cys62, Cys15/Cys38, Cys23/Cys43, and Cys27/Cys45. A Cysteine amide modification is found at Cys62.

This sequence belongs to the long (4 C-C) scorpion toxin superfamily. Sodium channel inhibitor family. Beta subfamily. As to expression, expressed by the venom gland.

Its subcellular location is the secreted. In terms of biological role, beta toxins bind voltage-independently at site-4 of sodium channels (Nav) and shift the voltage of activation toward more negative potentials thereby affecting sodium channel activation and promoting spontaneous and repetitive firing. This toxin is active on mammals. This chain is Toxin Tb2, found in Tityus bahiensis (Brazilian scorpion).